The sequence spans 355 residues: Holliday junction branch migration complex subunit RuvB (355 aa).

Residues 1–43 form a disordered region; that stretch reads MEEMDDFTVRRGEREDITGAAGPPEERPLDPAAFEEDDEPTLR. The interval 4 to 203 is large ATPase domain (RuvB-L); sequence MDDFTVRRGE…FGFSARLDYY (200 aa). The span at 7–17 shows a compositional bias: basic and acidic residues; it reads FTVRRGEREDI. ATP contacts are provided by residues Leu42, Arg43, Gly84, Lys87, Thr88, Ser89, 150–152, Arg193, Tyr203, and Arg240; that span reads EDF. Thr88 is a binding site for Mg(2+). The tract at residues 204–274 is small ATPAse domain (RuvB-S); sequence EPHELEKIVV…TANAALEMQG (71 aa). Positions 277–355 are head domain (RuvB-H); sequence HLGLDRTDRE…HLGFPVRDGG (79 aa). DNA contacts are provided by Arg313, Arg332, and Arg337.

Belongs to the RuvB family. As to quaternary structure, homohexamer. Forms an RuvA(8)-RuvB(12)-Holliday junction (HJ) complex. HJ DNA is sandwiched between 2 RuvA tetramers; dsDNA enters through RuvA and exits via RuvB. An RuvB hexamer assembles on each DNA strand where it exits the tetramer. Each RuvB hexamer is contacted by two RuvA subunits (via domain III) on 2 adjacent RuvB subunits; this complex drives branch migration. In the full resolvosome a probable DNA-RuvA(4)-RuvB(12)-RuvC(2) complex forms which resolves the HJ.

The protein resides in the cytoplasm. It catalyses the reaction ATP + H2O = ADP + phosphate + H(+). In terms of biological role, the RuvA-RuvB-RuvC complex processes Holliday junction (HJ) DNA during genetic recombination and DNA repair, while the RuvA-RuvB complex plays an important role in the rescue of blocked DNA replication forks via replication fork reversal (RFR). RuvA specifically binds to HJ cruciform DNA, conferring on it an open structure. The RuvB hexamer acts as an ATP-dependent pump, pulling dsDNA into and through the RuvAB complex. RuvB forms 2 homohexamers on either side of HJ DNA bound by 1 or 2 RuvA tetramers; 4 subunits per hexamer contact DNA at a time. Coordinated motions by a converter formed by DNA-disengaged RuvB subunits stimulates ATP hydrolysis and nucleotide exchange. Immobilization of the converter enables RuvB to convert the ATP-contained energy into a lever motion, pulling 2 nucleotides of DNA out of the RuvA tetramer per ATP hydrolyzed, thus driving DNA branch migration. The RuvB motors rotate together with the DNA substrate, which together with the progressing nucleotide cycle form the mechanistic basis for DNA recombination by continuous HJ branch migration. Branch migration allows RuvC to scan DNA until it finds its consensus sequence, where it cleaves and resolves cruciform DNA. The polypeptide is Holliday junction branch migration complex subunit RuvB (Rubrobacter xylanophilus (strain DSM 9941 / JCM 11954 / NBRC 16129 / PRD-1)).